The following is a 179-amino-acid chain: Auxin-induced protein IAA6 (179 aa).

An EAR-like (transcriptional repression) motif is present at residues 13-17; sequence LRLGL. Residues 31-52 are disordered; that stretch reads FSEIDGGVEENGGSGDRKSVDK. The PB1 domain maps to 75–163; that stretch reads KMYMKVSMDG…KRLRIMKRSD (89 aa).

It belongs to the Aux/IAA family. In terms of assembly, homodimers and heterodimers.

It is found in the nucleus. Functionally, aux/IAA proteins are short-lived transcriptional factors that function as repressors of early auxin response genes at low auxin concentrations. Repression is thought to result from the interaction with auxin response factors (ARFs), proteins that bind to the auxin-responsive promoter element (AuxRE). Formation of heterodimers with ARF proteins may alter their ability to modulate early auxin response genes expression. In Pisum sativum (Garden pea), this protein is Auxin-induced protein IAA6 (IAA6).